A 509-amino-acid chain; its full sequence is DNA primase DnaG (509 aa).

In terms of domain architecture, Toprim spans 167-253 (DAIVVVEGRA…CVEDLARHEV (87 aa)). Mg(2+) is bound by residues Glu-173, Asp-215, and Asp-217. Residues 267-411 (KQAASDDADP…ASTDEQPKTL (145 aa)) form a disordered region. 2 stretches are compositionally biased toward low complexity: residues 313–331 (PVSS…ETAA) and 383–402 (ESTA…AAGA).

It belongs to the archaeal DnaG primase family. In terms of assembly, forms a ternary complex with MCM helicase and DNA. The cofactor is Mg(2+).

The enzyme catalyses ssDNA + n NTP = ssDNA/pppN(pN)n-1 hybrid + (n-1) diphosphate.. Functionally, RNA polymerase that catalyzes the synthesis of short RNA molecules used as primers for DNA polymerase during DNA replication. This chain is DNA primase DnaG, found in Natronomonas pharaonis (strain ATCC 35678 / DSM 2160 / CIP 103997 / JCM 8858 / NBRC 14720 / NCIMB 2260 / Gabara) (Halobacterium pharaonis).